Reading from the N-terminus, the 371-residue chain is Histidinol-phosphate aminotransferase (371 aa).

Lys-229 carries the N6-(pyridoxal phosphate)lysine modification.

Belongs to the class-II pyridoxal-phosphate-dependent aminotransferase family. Histidinol-phosphate aminotransferase subfamily. In terms of assembly, homodimer. Requires pyridoxal 5'-phosphate as cofactor.

It carries out the reaction L-histidinol phosphate + 2-oxoglutarate = 3-(imidazol-4-yl)-2-oxopropyl phosphate + L-glutamate. It participates in amino-acid biosynthesis; L-histidine biosynthesis; L-histidine from 5-phospho-alpha-D-ribose 1-diphosphate: step 7/9. This chain is Histidinol-phosphate aminotransferase, found in Roseiflexus castenholzii (strain DSM 13941 / HLO8).